We begin with the raw amino-acid sequence, 679 residues long: Methionine--tRNA ligase (679 aa).

The 'HIGH' region motif lies at 14-24 (PYANGSIHLGH). Zn(2+)-binding residues include C145, C148, C158, and C161. Residues 331–335 (KMSKS) carry the 'KMSKS' region motif. Residue K334 coordinates ATP. The tRNA-binding domain maps to 577–679 (TFAAVDLRVA…SGAKPGQRIK (103 aa)).

The protein belongs to the class-I aminoacyl-tRNA synthetase family. MetG type 1 subfamily. Homodimer. The cofactor is Zn(2+).

The protein resides in the cytoplasm. It carries out the reaction tRNA(Met) + L-methionine + ATP = L-methionyl-tRNA(Met) + AMP + diphosphate. In terms of biological role, is required not only for elongation of protein synthesis but also for the initiation of all mRNA translation through initiator tRNA(fMet) aminoacylation. The sequence is that of Methionine--tRNA ligase from Pseudomonas putida (strain ATCC 47054 / DSM 6125 / CFBP 8728 / NCIMB 11950 / KT2440).